A 1455-amino-acid polypeptide reads, in one-letter code: DNA polymerase II large subunit (1455 aa).

The segment at 1409 to 1440 (GLLENLSNGSKKTEKAEKAEKPRKKSDEKPKK) is disordered. A compositionally biased stretch (basic and acidic residues) spans 1419–1438 (KKTEKAEKAEKPRKKSDEKP).

The protein belongs to the archaeal DNA polymerase II family. Heterodimer of a large subunit and a small subunit. This protein undergoes a protein self splicing that involves a post-translational excision of the intervening region (intein) followed by peptide ligation.

The enzyme catalyses DNA(n) + a 2'-deoxyribonucleoside 5'-triphosphate = DNA(n+1) + diphosphate. It catalyses the reaction Exonucleolytic cleavage in the 3'- to 5'-direction to yield nucleoside 5'-phosphates.. Functionally, possesses two activities: a DNA synthesis (polymerase) and an exonucleolytic activity that degrades single-stranded DNA in the 3'- to 5'-direction. Has a template-primer preference which is characteristic of a replicative DNA polymerase. The chain is DNA polymerase II large subunit (polC) from Pyrococcus abyssi (strain GE5 / Orsay).